An 834-amino-acid polypeptide reads, in one-letter code: Glycerol-3-phosphate acyltransferase (834 aa).

The short motif at C309 to I314 is the HXXXXD motif element.

It belongs to the GPAT/DAPAT family.

It is found in the cell inner membrane. The catalysed reaction is sn-glycerol 3-phosphate + an acyl-CoA = a 1-acyl-sn-glycero-3-phosphate + CoA. The protein operates within phospholipid metabolism; CDP-diacylglycerol biosynthesis; CDP-diacylglycerol from sn-glycerol 3-phosphate: step 1/3. This is Glycerol-3-phosphate acyltransferase from Pseudomonas fluorescens (strain ATCC BAA-477 / NRRL B-23932 / Pf-5).